Consider the following 184-residue polypeptide: Threonylcarbamoyl-AMP synthase (184 aa).

The 184-residue stretch at 1–184 (MNNLLAVIEL…IFTQHIFRQG (184 aa)) folds into the YrdC-like domain.

This sequence belongs to the SUA5 family. TsaC subfamily.

Its subcellular location is the cytoplasm. It carries out the reaction L-threonine + hydrogencarbonate + ATP = L-threonylcarbamoyladenylate + diphosphate + H2O. Functionally, required for the formation of a threonylcarbamoyl group on adenosine at position 37 (t(6)A37) in tRNAs that read codons beginning with adenine. Catalyzes the conversion of L-threonine, HCO(3)(-)/CO(2) and ATP to give threonylcarbamoyl-AMP (TC-AMP) as the acyladenylate intermediate, with the release of diphosphate. The chain is Threonylcarbamoyl-AMP synthase from Haemophilus ducreyi (strain 35000HP / ATCC 700724).